Here is a 314-residue protein sequence, read N- to C-terminus: GTPase Era (314 aa).

Positions 7–188 (RCGFAAVIGS…REFIAGLMPE (182 aa)) constitute an Era-type G domain. A G1 region spans residues 15 to 22 (GSPNAGKS). A GTP-binding site is contributed by 15 to 22 (GSPNAGKS). The G2 stretch occupies residues 41–45 (QTTRF). The interval 62–65 (DTPG) is G3. GTP-binding positions include 62–66 (DTPGV) and 138–141 (NKVD). The G4 stretch occupies residues 138–141 (NKVD). Residues 167-169 (ISA) form a G5 region. Positions 219–296 (LHEELPYASM…HLFLNVKVDA (78 aa)) constitute a KH type-2 domain.

Belongs to the TRAFAC class TrmE-Era-EngA-EngB-Septin-like GTPase superfamily. Era GTPase family. As to quaternary structure, monomer.

It is found in the cytoplasm. The protein localises to the cell inner membrane. Its function is as follows. An essential GTPase that binds both GDP and GTP, with rapid nucleotide exchange. Plays a role in 16S rRNA processing and 30S ribosomal subunit biogenesis and possibly also in cell cycle regulation and energy metabolism. This is GTPase Era from Maricaulis maris (strain MCS10) (Caulobacter maris).